We begin with the raw amino-acid sequence, 186 residues long: Astacin-like metalloprotease toxin 5 (186 aa).

Residues 1–186 (NAVKYDQQLW…CHSKRKAELL (186 aa)) enclose the Peptidase M12A domain. Cystine bridges form between cysteine 42/cysteine 177 and cysteine 63/cysteine 84. Histidine 92 serves as a coordination point for Zn(2+). Residue glutamate 93 is part of the active site. Positions 96 and 102 each coordinate Zn(2+). An N-linked (GlcNAc...) asparagine glycan is attached at asparagine 122.

As to quaternary structure, monomer. The cofactor is Zn(2+). Expressed by the venom gland.

The protein localises to the secreted. Its activity is regulated as follows. Inhibited by 1,10-phenanthroline. Functionally, zinc metalloprotease. Provoques deadhesion of endothelial cells from cell cultures, and also degradation of fibronectin, fibrinogen and gelatin in vitro. Its role in the venom is not fully understood but it might act as a spreading factor that facilitates diffusion of other venom toxins. Alternatively, it might be involved in the proteolytic processing of other venom toxins or it might play a role in extra-oral digestion of prey. The protein is Astacin-like metalloprotease toxin 5 of Loxosceles gaucho (Spider).